A 152-amino-acid chain; its full sequence is Large ribosomal subunit protein uL15 (152 aa).

Residues 1-56 form a disordered region; the sequence is MTSTLNTLKSNLGSRKKKLRKGRGIAAGQGASCGFGMRGQKSRSGRPTRPGFEGGQ. The span at 14 to 23 shows a compositional bias: basic residues; sequence SRKKKLRKGR. A compositionally biased stretch (gly residues) spans 25–37; it reads IAAGQGASCGFGM.

The protein belongs to the universal ribosomal protein uL15 family. Part of the 50S ribosomal subunit.

Functionally, binds to the 23S rRNA. This is Large ribosomal subunit protein uL15 from Prochlorococcus marinus (strain MIT 9515).